Here is a 71-residue protein sequence, read N- to C-terminus: Large ribosomal subunit protein bL31 (71 aa).

The Zn(2+) site is built by cysteine 16, cysteine 18, cysteine 37, and cysteine 40.

It belongs to the bacterial ribosomal protein bL31 family. Type A subfamily. Part of the 50S ribosomal subunit. Zn(2+) is required as a cofactor.

Binds the 23S rRNA. This Nitratidesulfovibrio vulgaris (strain DSM 19637 / Miyazaki F) (Desulfovibrio vulgaris) protein is Large ribosomal subunit protein bL31.